The following is a 246-amino-acid chain: TVP38/TMEM64 family membrane protein MT0653 (246 aa).

5 consecutive transmembrane segments (helical) span residues 19–39 (LVVF…TDVI), 57–77 (LTYV…PILA), 83–103 (LFGP…TAVV), 157–177 (AFGT…IGSA), and 196–216 (LLAS…AFAA).

The protein belongs to the TVP38/TMEM64 family.

It is found in the cell membrane. The protein is TVP38/TMEM64 family membrane protein MT0653 of Mycobacterium tuberculosis (strain CDC 1551 / Oshkosh).